The following is a 184-amino-acid chain: ATP synthase subunit b, chloroplastic (184 aa).

A helical transmembrane segment spans residues 26-48 (ILATNLINLSVVLGVLIFFGKGV).

This sequence belongs to the ATPase B chain family. As to quaternary structure, F-type ATPases have 2 components, F(1) - the catalytic core - and F(0) - the membrane proton channel. F(1) has five subunits: alpha(3), beta(3), gamma(1), delta(1), epsilon(1). F(0) has four main subunits: a(1), b(1), b'(1) and c(10-14). The alpha and beta chains form an alternating ring which encloses part of the gamma chain. F(1) is attached to F(0) by a central stalk formed by the gamma and epsilon chains, while a peripheral stalk is formed by the delta, b and b' chains.

The protein resides in the plastid. It is found in the chloroplast thylakoid membrane. In terms of biological role, f(1)F(0) ATP synthase produces ATP from ADP in the presence of a proton or sodium gradient. F-type ATPases consist of two structural domains, F(1) containing the extramembraneous catalytic core and F(0) containing the membrane proton channel, linked together by a central stalk and a peripheral stalk. During catalysis, ATP synthesis in the catalytic domain of F(1) is coupled via a rotary mechanism of the central stalk subunits to proton translocation. Functionally, component of the F(0) channel, it forms part of the peripheral stalk, linking F(1) to F(0). The polypeptide is ATP synthase subunit b, chloroplastic (Calycanthus floridus var. glaucus (Eastern sweetshrub)).